The primary structure comprises 271 residues: Formamidopyrimidine-DNA glycosylase (271 aa).

The Schiff-base intermediate with DNA role is filled by Pro2. The active-site Proton donor is Glu3. Lys57 acts as the Proton donor; for beta-elimination activity in catalysis. Residues His90, Arg109, and Lys151 each coordinate DNA. An FPG-type zinc finger spans residues 236 to 270 (HVYGRGGETCTQCGNLLSEIKLGQRATVFCGLCQP). Arg260 (proton donor; for delta-elimination activity) is an active-site residue.

Belongs to the FPG family. As to quaternary structure, monomer. Requires Zn(2+) as cofactor.

The catalysed reaction is Hydrolysis of DNA containing ring-opened 7-methylguanine residues, releasing 2,6-diamino-4-hydroxy-5-(N-methyl)formamidopyrimidine.. The enzyme catalyses 2'-deoxyribonucleotide-(2'-deoxyribose 5'-phosphate)-2'-deoxyribonucleotide-DNA = a 3'-end 2'-deoxyribonucleotide-(2,3-dehydro-2,3-deoxyribose 5'-phosphate)-DNA + a 5'-end 5'-phospho-2'-deoxyribonucleoside-DNA + H(+). Involved in base excision repair of DNA damaged by oxidation or by mutagenic agents. Acts as a DNA glycosylase that recognizes and removes damaged bases. Has a preference for oxidized purines, such as 7,8-dihydro-8-oxoguanine (8-oxoG). Has AP (apurinic/apyrimidinic) lyase activity and introduces nicks in the DNA strand. Cleaves the DNA backbone by beta-delta elimination to generate a single-strand break at the site of the removed base with both 3'- and 5'-phosphates. This chain is Formamidopyrimidine-DNA glycosylase, found in Shewanella loihica (strain ATCC BAA-1088 / PV-4).